A 147-amino-acid chain; its full sequence is uncharacterized protein (147 aa).

Positions 50–138 (IVVAGNIKVK…LLAKPAEIKI (89 aa)) constitute an ABM domain.

This sequence belongs to the LsrG family.

This is an uncharacterized protein from Synechocystis sp. (strain ATCC 27184 / PCC 6803 / Kazusa).